The primary structure comprises 282 residues: Phosphatidylserine decarboxylase proenzyme (282 aa).

Catalysis depends on charge relay system; for autoendoproteolytic cleavage activity residues Asp88, His144, and Ser247. The active-site Schiff-base intermediate with substrate; via pyruvic acid; for decarboxylase activity is the Ser247. Ser247 carries the post-translational modification Pyruvic acid (Ser); by autocatalysis.

It belongs to the phosphatidylserine decarboxylase family. PSD-B subfamily. Prokaryotic type I sub-subfamily. As to quaternary structure, heterodimer of a large membrane-associated beta subunit and a small pyruvoyl-containing alpha subunit. The cofactor is pyruvate. Is synthesized initially as an inactive proenzyme. Formation of the active enzyme involves a self-maturation process in which the active site pyruvoyl group is generated from an internal serine residue via an autocatalytic post-translational modification. Two non-identical subunits are generated from the proenzyme in this reaction, and the pyruvate is formed at the N-terminus of the alpha chain, which is derived from the carboxyl end of the proenzyme. The autoendoproteolytic cleavage occurs by a canonical serine protease mechanism, in which the side chain hydroxyl group of the serine supplies its oxygen atom to form the C-terminus of the beta chain, while the remainder of the serine residue undergoes an oxidative deamination to produce ammonia and the pyruvoyl prosthetic group on the alpha chain. During this reaction, the Ser that is part of the protease active site of the proenzyme becomes the pyruvoyl prosthetic group, which constitutes an essential element of the active site of the mature decarboxylase.

It localises to the cell membrane. The catalysed reaction is a 1,2-diacyl-sn-glycero-3-phospho-L-serine + H(+) = a 1,2-diacyl-sn-glycero-3-phosphoethanolamine + CO2. It participates in phospholipid metabolism; phosphatidylethanolamine biosynthesis; phosphatidylethanolamine from CDP-diacylglycerol: step 2/2. Catalyzes the formation of phosphatidylethanolamine (PtdEtn) from phosphatidylserine (PtdSer). This chain is Phosphatidylserine decarboxylase proenzyme, found in Xanthomonas oryzae pv. oryzae (strain KACC10331 / KXO85).